The following is a 216-amino-acid chain: Refilin-B (216 aa).

A disordered region spans residues 1–55; the sequence is MVGRLSLQDVPELVDTKKKGDGVLDSPDSGLPPSPSPSHWGLAATAGGGGERAPV. 2 positions are modified to phosphoserine: S6 and S26.

The protein belongs to the Refilin family. Interacts with FLNA and FLNB. As to expression, detected in various tissues, with highest expression in lung, followed by spleen.

Its subcellular location is the cytoplasm. It localises to the cytoskeleton. Its function is as follows. Involved in the regulation of the perinuclear actin network and nuclear shape through interaction with filamins. Plays an essential role in the formation of cartilaginous skeletal elements. In Mus musculus (Mouse), this protein is Refilin-B.